The sequence spans 401 residues: tRNA(Met) cytidine acetate ligase (401 aa).

ATP contacts are provided by residues 7 to 20, glycine 102, asparagine 164, and arginine 189; that span reads IVEY…HLYH.

Belongs to the TmcAL family.

It is found in the cytoplasm. The enzyme catalyses cytidine(34) in elongator tRNA(Met) + acetate + ATP = N(4)-acetylcytidine(34) in elongator tRNA(Met) + AMP + diphosphate. Its function is as follows. Catalyzes the formation of N(4)-acetylcytidine (ac(4)C) at the wobble position of elongator tRNA(Met), using acetate and ATP as substrates. First activates an acetate ion to form acetyladenylate (Ac-AMP) and then transfers the acetyl group to tRNA to form ac(4)C34. The polypeptide is tRNA(Met) cytidine acetate ligase (Caldanaerobacter subterraneus subsp. tengcongensis (strain DSM 15242 / JCM 11007 / NBRC 100824 / MB4) (Thermoanaerobacter tengcongensis)).